Here is a 290-residue protein sequence, read N- to C-terminus: Fructose-1,6-bisphosphatase class 1 (290 aa).

Residues glutamate 78, aspartate 96, leucine 98, and aspartate 99 each contribute to the Mg(2+) site. Substrate contacts are provided by residues 99–102 (DGSS), tyrosine 201, and lysine 226. Glutamate 232 serves as a coordination point for Mg(2+).

It belongs to the FBPase class 1 family. In terms of assembly, homotetramer. It depends on Mg(2+) as a cofactor.

The protein localises to the cytoplasm. It catalyses the reaction beta-D-fructose 1,6-bisphosphate + H2O = beta-D-fructose 6-phosphate + phosphate. It participates in carbohydrate biosynthesis; gluconeogenesis. This is Fructose-1,6-bisphosphatase class 1 from Helicobacter pylori (strain Shi470).